Consider the following 148-residue polypeptide: UPF0134 protein MPN_204 (148 aa).

This sequence belongs to the UPF0134 family.

The sequence is that of UPF0134 protein MPN_204 from Mycoplasma pneumoniae (strain ATCC 29342 / M129 / Subtype 1) (Mycoplasmoides pneumoniae).